The sequence spans 225 residues: Uridylate kinase (225 aa).

9-10 (GS) contributes to the ATP binding site. UMP is bound at residue Gly-46. Residues Gly-47 and Arg-51 each contribute to the ATP site. Residues Asp-67 and 115 to 121 (THPAHTT) each bind UMP. ATP-binding residues include Thr-141, Asn-142, Tyr-147, and Asp-150.

Belongs to the UMP kinase family. Homohexamer.

Its subcellular location is the cytoplasm. It carries out the reaction UMP + ATP = UDP + ADP. It participates in pyrimidine metabolism; CTP biosynthesis via de novo pathway; UDP from UMP (UMPK route): step 1/1. Inhibited by UTP. Its function is as follows. Catalyzes the reversible phosphorylation of UMP to UDP. The sequence is that of Uridylate kinase from Methanococcus maripaludis (strain C6 / ATCC BAA-1332).